Reading from the N-terminus, the 196-residue chain is Shikimate kinase (196 aa).

21–26 (GTGKSR) lines the ATP pocket. Serine 25 lines the Mg(2+) pocket. Substrate is bound by residues aspartate 43, arginine 67, and glycine 89. Arginine 126 contributes to the ATP binding site. Arginine 145 is a substrate binding site. Arginine 161 contacts ATP.

Belongs to the shikimate kinase family. Monomer. The cofactor is Mg(2+).

It localises to the cytoplasm. It carries out the reaction shikimate + ATP = 3-phosphoshikimate + ADP + H(+). The protein operates within metabolic intermediate biosynthesis; chorismate biosynthesis; chorismate from D-erythrose 4-phosphate and phosphoenolpyruvate: step 5/7. In terms of biological role, catalyzes the specific phosphorylation of the 3-hydroxyl group of shikimic acid using ATP as a cosubstrate. This Deinococcus radiodurans (strain ATCC 13939 / DSM 20539 / JCM 16871 / CCUG 27074 / LMG 4051 / NBRC 15346 / NCIMB 9279 / VKM B-1422 / R1) protein is Shikimate kinase.